A 472-amino-acid polypeptide reads, in one-letter code: Adenosylhomocysteinase (472 aa).

Substrate is bound by residues Thr-61, Asp-136, and Glu-196. An NAD(+)-binding site is contributed by 197 to 199 (TTT). Positions 226 and 230 each coordinate substrate. NAD(+) is bound by residues Asn-231, 260-265 (GYGDVG), Glu-283, Asn-318, 339-341 (IGH), and Asn-384.

The protein belongs to the adenosylhomocysteinase family. NAD(+) is required as a cofactor.

It is found in the cytoplasm. It carries out the reaction S-adenosyl-L-homocysteine + H2O = L-homocysteine + adenosine. It participates in amino-acid biosynthesis; L-homocysteine biosynthesis; L-homocysteine from S-adenosyl-L-homocysteine: step 1/1. May play a key role in the regulation of the intracellular concentration of adenosylhomocysteine. This chain is Adenosylhomocysteinase, found in Cupriavidus necator (strain ATCC 17699 / DSM 428 / KCTC 22496 / NCIMB 10442 / H16 / Stanier 337) (Ralstonia eutropha).